The sequence spans 244 residues: Tabinhibitin 8 (244 aa).

The signal sequence occupies residues 1–23 (MTSILVSRFKISALTLQYATSDS). One can recognise an SCP domain in the interval 67 to 194 (YTGGGIIVLR…KTPLFFSSNC (128 aa)). A Cell attachment site motif is present at residues 143–145 (RGD).

The protein belongs to the CRISP family. In terms of tissue distribution, expressed in salivary glands.

The protein resides in the secreted. In terms of biological role, inhibits platelet aggregation induced by all agonists tested (ADP, arachidonic acid, the thromboxane A2 analog U46619, thrombin, and snake venom snaclecs (TMVA that activates platelet through GPIB, and stejnulxin that specifically acts through GPVI (GP6))). May act by competing with fibrinogen for binding to glycoprotein IIb/IIIa (ITGA2B/ITGB3). The chain is Tabinhibitin 8 from Tabanus yao (Horsefly).